We begin with the raw amino-acid sequence, 122 residues long: Large ribosomal subunit protein uL14 (122 aa).

The protein belongs to the universal ribosomal protein uL14 family. As to quaternary structure, part of the 50S ribosomal subunit. Forms a cluster with proteins L3 and L19. In the 70S ribosome, L14 and L19 interact and together make contacts with the 16S rRNA in bridges B5 and B8.

Binds to 23S rRNA. Forms part of two intersubunit bridges in the 70S ribosome. In Salinispora tropica (strain ATCC BAA-916 / DSM 44818 / JCM 13857 / NBRC 105044 / CNB-440), this protein is Large ribosomal subunit protein uL14.